We begin with the raw amino-acid sequence, 158 residues long: 6,7-dimethyl-8-ribityllumazine synthase (158 aa).

5-amino-6-(D-ribitylamino)uracil-binding positions include Phe22, 57-59 (AYE), and 81-83 (AVI). 86–87 (GT) contacts (2S)-2-hydroxy-3-oxobutyl phosphate. The active-site Proton donor is the His89. Residue Phe114 coordinates 5-amino-6-(D-ribitylamino)uracil. Arg128 lines the (2S)-2-hydroxy-3-oxobutyl phosphate pocket.

It belongs to the DMRL synthase family. In terms of assembly, forms an icosahedral capsid composed of 60 subunits, arranged as a dodecamer of pentamers.

It catalyses the reaction (2S)-2-hydroxy-3-oxobutyl phosphate + 5-amino-6-(D-ribitylamino)uracil = 6,7-dimethyl-8-(1-D-ribityl)lumazine + phosphate + 2 H2O + H(+). It functions in the pathway cofactor biosynthesis; riboflavin biosynthesis; riboflavin from 2-hydroxy-3-oxobutyl phosphate and 5-amino-6-(D-ribitylamino)uracil: step 1/2. Functionally, catalyzes the formation of 6,7-dimethyl-8-ribityllumazine by condensation of 5-amino-6-(D-ribitylamino)uracil with 3,4-dihydroxy-2-butanone 4-phosphate. This is the penultimate step in the biosynthesis of riboflavin. This chain is 6,7-dimethyl-8-ribityllumazine synthase, found in Pseudoalteromonas atlantica (strain T6c / ATCC BAA-1087).